We begin with the raw amino-acid sequence, 125 residues long: Large ribosomal subunit protein bL12 (125 aa).

Belongs to the bacterial ribosomal protein bL12 family. In terms of assembly, homodimer. Part of the ribosomal stalk of the 50S ribosomal subunit. Forms a multimeric L10(L12)X complex, where L10 forms an elongated spine to which 2 to 4 L12 dimers bind in a sequential fashion. Binds GTP-bound translation factors.

Functionally, forms part of the ribosomal stalk which helps the ribosome interact with GTP-bound translation factors. Is thus essential for accurate translation. The chain is Large ribosomal subunit protein bL12 from Parabacteroides distasonis (strain ATCC 8503 / DSM 20701 / CIP 104284 / JCM 5825 / NCTC 11152).